The chain runs to 287 residues: ATP synthase gamma chain (287 aa).

This sequence belongs to the ATPase gamma chain family. In terms of assembly, F-type ATPases have 2 components, CF(1) - the catalytic core - and CF(0) - the membrane proton channel. CF(1) has five subunits: alpha(3), beta(3), gamma(1), delta(1), epsilon(1). CF(0) has three main subunits: a, b and c.

Its subcellular location is the cell inner membrane. In terms of biological role, produces ATP from ADP in the presence of a proton gradient across the membrane. The gamma chain is believed to be important in regulating ATPase activity and the flow of protons through the CF(0) complex. The protein is ATP synthase gamma chain of Escherichia coli (strain 55989 / EAEC).